Consider the following 264-residue polypeptide: tRNA (guanine-N(1)-)-methyltransferase (264 aa).

S-adenosyl-L-methionine contacts are provided by residues Gly-120 and 140-145; that span reads IGDYVL.

The protein belongs to the RNA methyltransferase TrmD family. As to quaternary structure, homodimer.

It is found in the cytoplasm. The catalysed reaction is guanosine(37) in tRNA + S-adenosyl-L-methionine = N(1)-methylguanosine(37) in tRNA + S-adenosyl-L-homocysteine + H(+). Its function is as follows. Specifically methylates guanosine-37 in various tRNAs. This is tRNA (guanine-N(1)-)-methyltransferase from Halorhodospira halophila (strain DSM 244 / SL1) (Ectothiorhodospira halophila (strain DSM 244 / SL1)).